The following is a 352-amino-acid chain: Dof zinc finger protein DOF1.8 (352 aa).

Positions 24 to 46 (LKQQSNPPSPATPVERKARPEKD) are disordered. A compositionally biased stretch (basic and acidic residues) spans 37-46 (VERKARPEKD). A Dof-type zinc finger spans residues 49 to 103 (LNCPRCNSLNTKFCYYNNYSLTQPRYFCKDCRRYWTAGGSLRNIPVGGGVRKNKR). Residues Cys-51, Cys-54, Cys-76, and Cys-79 each contribute to the Zn(2+) site. Disordered regions lie at residues 93 to 136 (PVGG…PLPH) and 265 to 334 (GGDP…VGFW). Low complexity predominate over residues 104-129 (SSSNSSSSSPSSSSSSKKPLFANNNT). Positions 310 to 323 (ENNDEHSDHEHEKE) are enriched in basic and acidic residues.

The protein resides in the nucleus. Transcription factor that binds specifically to a 5'-AA[AG]G-3' consensus core sequence. In Arabidopsis thaliana (Mouse-ear cress), this protein is Dof zinc finger protein DOF1.8 (DOF1.8).